A 235-amino-acid polypeptide reads, in one-letter code: Ribonuclease 3 (235 aa).

In terms of domain architecture, RNase III spans 7–131; that stretch reads LSALEARIGH…IIGAVFLDGG (125 aa). E45 contributes to the Mg(2+) binding site. D49 is a catalytic residue. The Mg(2+) site is built by D117 and E120. E120 is a catalytic residue. The region spanning 156–225 is the DRBM domain; it reads DPKTTLQEWA…AAAFLTREKI (70 aa).

The protein belongs to the ribonuclease III family. Homodimer. Mg(2+) is required as a cofactor.

The protein localises to the cytoplasm. The enzyme catalyses Endonucleolytic cleavage to 5'-phosphomonoester.. In terms of biological role, digests double-stranded RNA. Involved in the processing of primary rRNA transcript to yield the immediate precursors to the large and small rRNAs (23S and 16S). Processes some mRNAs, and tRNAs when they are encoded in the rRNA operon. Processes pre-crRNA and tracrRNA of type II CRISPR loci if present in the organism. In Methylocella silvestris (strain DSM 15510 / CIP 108128 / LMG 27833 / NCIMB 13906 / BL2), this protein is Ribonuclease 3.